A 388-amino-acid polypeptide reads, in one-letter code: Succinate--CoA ligase [ADP-forming] subunit beta (388 aa).

The ATP-grasp domain maps to Lys9–His244. Residues Lys46, Gly53–Gly55, Glu99, Ser102, and Glu107 each bind ATP. Positions 199 and 213 each coordinate Mg(2+). Substrate contacts are provided by residues Asn264 and Gly321–Val323.

It belongs to the succinate/malate CoA ligase beta subunit family. Heterotetramer of two alpha and two beta subunits. The cofactor is Mg(2+).

It carries out the reaction succinate + ATP + CoA = succinyl-CoA + ADP + phosphate. It catalyses the reaction GTP + succinate + CoA = succinyl-CoA + GDP + phosphate. It participates in carbohydrate metabolism; tricarboxylic acid cycle; succinate from succinyl-CoA (ligase route): step 1/1. In terms of biological role, succinyl-CoA synthetase functions in the citric acid cycle (TCA), coupling the hydrolysis of succinyl-CoA to the synthesis of either ATP or GTP and thus represents the only step of substrate-level phosphorylation in the TCA. The beta subunit provides nucleotide specificity of the enzyme and binds the substrate succinate, while the binding sites for coenzyme A and phosphate are found in the alpha subunit. This chain is Succinate--CoA ligase [ADP-forming] subunit beta, found in Aliivibrio salmonicida (strain LFI1238) (Vibrio salmonicida (strain LFI1238)).